The chain runs to 496 residues: UDP-N-acetylmuramoylalanine--D-glutamate ligase (496 aa).

Residue 130 to 136 (GTNGKTT) coordinates ATP.

The protein belongs to the MurCDEF family. In terms of assembly, interacts with PknA. In terms of processing, phosphorylated by PknA.

The protein resides in the cytoplasm. The enzyme catalyses UDP-N-acetyl-alpha-D-muramoyl-L-alanine + D-glutamate + ATP = UDP-N-acetyl-alpha-D-muramoyl-L-alanyl-D-glutamate + ADP + phosphate + H(+). It functions in the pathway cell wall biogenesis; peptidoglycan biosynthesis. In terms of biological role, cell wall formation. Catalyzes the addition of glutamate to the nucleotide precursor UDP-N-acetylmuramoyl-L-alanine (UMA). In Mycobacterium tuberculosis (strain ATCC 25177 / H37Ra), this protein is UDP-N-acetylmuramoylalanine--D-glutamate ligase.